The chain runs to 350 residues: Uroporphyrinogen decarboxylase (350 aa).

Substrate is bound by residues 28-32 (RQAGR), F47, D78, Y155, S210, and H325.

This sequence belongs to the uroporphyrinogen decarboxylase family. In terms of assembly, homodimer.

The protein localises to the cytoplasm. It catalyses the reaction uroporphyrinogen III + 4 H(+) = coproporphyrinogen III + 4 CO2. It functions in the pathway porphyrin-containing compound metabolism; protoporphyrin-IX biosynthesis; coproporphyrinogen-III from 5-aminolevulinate: step 4/4. Catalyzes the decarboxylation of four acetate groups of uroporphyrinogen-III to yield coproporphyrinogen-III. This Nostoc sp. (strain PCC 7120 / SAG 25.82 / UTEX 2576) protein is Uroporphyrinogen decarboxylase.